Consider the following 90-residue polypeptide: Probable Fe(2+)-trafficking protein (90 aa).

It belongs to the Fe(2+)-trafficking protein family.

Could be a mediator in iron transactions between iron acquisition and iron-requiring processes, such as synthesis and/or repair of Fe-S clusters in biosynthetic enzymes. The protein is Probable Fe(2+)-trafficking protein of Chromohalobacter salexigens (strain ATCC BAA-138 / DSM 3043 / CIP 106854 / NCIMB 13768 / 1H11).